The following is a 534-amino-acid chain: Nitrate/nitrite transporter NrtP (534 aa).

12 helical membrane-spanning segments follow: residues 19-39 (WFAF…ATTI), 52-72 (TIGL…GMLL), 79-99 (LTYS…ATAQ), 109-129 (LLMG…AEWF), 150-170 (AFSA…PGAF), 195-215 (AAIA…YFSV), 240-260 (DFWF…VLAW), 266-286 (NFLN…LYLF), 382-404 (WTMV…VAGT), 409-431 (IAVL…TFAI), 445-465 (GNVG…LLLL), and 485-505 (GFFQ…AFFL).

This sequence belongs to the major facilitator superfamily. Nitrate/nitrite porter (TC 2.A.1.8) family.

It is found in the cell inner membrane. In terms of biological role, high-efficiency transport system for both nitrate and nitrite. In Picosynechococcus sp. (strain ATCC 27264 / PCC 7002 / PR-6) (Agmenellum quadruplicatum), this protein is Nitrate/nitrite transporter NrtP.